The following is a 417-amino-acid chain: Tyrosine--tRNA ligase (417 aa).

Residue Tyr39 coordinates L-tyrosine. The 'HIGH' region motif lies at 44-53 (ATATSLHIGN). Tyr176 and Gln180 together coordinate L-tyrosine. A 'KMSKS' region motif is present at residues 236 to 240 (KMGKS). Lys239 is an ATP binding site. The region spanning 350–416 (IGILSLLVTA…GKKKHVLVRP (67 aa)) is the S4 RNA-binding domain.

The protein belongs to the class-I aminoacyl-tRNA synthetase family. TyrS type 1 subfamily. As to quaternary structure, homodimer.

It is found in the cytoplasm. It carries out the reaction tRNA(Tyr) + L-tyrosine + ATP = L-tyrosyl-tRNA(Tyr) + AMP + diphosphate + H(+). Catalyzes the attachment of tyrosine to tRNA(Tyr) in a two-step reaction: tyrosine is first activated by ATP to form Tyr-AMP and then transferred to the acceptor end of tRNA(Tyr). In Mesorhizobium japonicum (strain LMG 29417 / CECT 9101 / MAFF 303099) (Mesorhizobium loti (strain MAFF 303099)), this protein is Tyrosine--tRNA ligase.